Consider the following 158-residue polypeptide: Lipoprotein signal peptidase (158 aa).

Helical transmembrane passes span 4–24, 63–83, and 88–108; these read KYYITISLIVAIAILIIDQVT, KMGFFYIITIVILIVLVLFYI, and YNLFMQVAISLLFAGALGNFI. Active-site residues include D118 and D136. The helical transmembrane segment at 131 to 151 threads the bilayer; that stretch reads IFNVADSSLTIGVLFIIIALL.

Belongs to the peptidase A8 family.

Its subcellular location is the cell membrane. It carries out the reaction Release of signal peptides from bacterial membrane prolipoproteins. Hydrolyzes -Xaa-Yaa-Zaa-|-(S,diacylglyceryl)Cys-, in which Xaa is hydrophobic (preferably Leu), and Yaa (Ala or Ser) and Zaa (Gly or Ala) have small, neutral side chains.. It participates in protein modification; lipoprotein biosynthesis (signal peptide cleavage). This protein specifically catalyzes the removal of signal peptides from prolipoproteins. The polypeptide is Lipoprotein signal peptidase (Staphylococcus haemolyticus (strain JCSC1435)).